Reading from the N-terminus, the 317-residue chain is Taste receptor type 2 member 14 (317 aa).

At M1–S7 the chain is on the extracellular side. A helical transmembrane segment spans residues I8–A28. The Cytoplasmic portion of the chain corresponds to L29–K55. Residues I56 to F76 traverse the membrane as a helical segment. At A77 to N87 the chain is on the extracellular side. 2 residues coordinate cholesterol: T86 and W89. Residues I88–F108 traverse the membrane as a helical segment. The Cytoplasmic segment spans residues L109 to V129. The helical transmembrane segment at V130 to I150 threads the bilayer. Over H151–T184 the chain is Extracellular. N153, N162, and N171 each carry an N-linked (GlcNAc...) asparagine glycan. V180 lines the cholesterol pocket. Residues V185 to M205 traverse the membrane as a helical segment. The Cytoplasmic segment spans residues W206–S232. The chain crosses the membrane as a helical span at residues M233–T253. At S254 to L261 the chain is on the extracellular side. Residues I262–L282 traverse the membrane as a helical segment. Cholesterol is bound by residues S265 and M268. At G283–S317 the chain is on the cytoplasmic side.

Belongs to the G-protein coupled receptor T2R family. As to quaternary structure, core component of the TAS2R14-GNAI1 complex, consisting of TAS2R14, GNAI1, GNB1 and GNG2; within the complex interacts with GNAI1. Core component of the TAS2R14-GNAT3 complex, consisting of TAS2R14, GNAT3, GNB1 and GNG2; within the complex interacts with GNAT3. Core component of the TAS2R14-GNAS2 complex, consisting of TAS2R14, GNAS2, GNB1 and GNG2; within the complex interacts with GNAS2.

It localises to the membrane. It catalyses the reaction Ca(2+)(in) = Ca(2+)(out). It carries out the reaction 3',5'-cyclic AMP(in) = 3',5'-cyclic AMP(out). With respect to regulation, basal activity is enhanced by binding to bitter tastants, such as flufenamic acid and aristolochic acid. Regulated by cholesterol in a concentration-dependent manner. Functionally, gustducin-linked G-protein coupled receptor that plays a role in the perception of bitterness. The activity of this receptor stimulates GNAT3, activating the gustducin G-protein pathway. Likely plays a role in sensing the chemical composition of the gastrointestinal content and other extra-oral tissues via the inhibitory G-protein pathways. This is Taste receptor type 2 member 14 (TAS2R14) from Pan paniscus (Pygmy chimpanzee).